Consider the following 409-residue polypeptide: Nucleoprotein (409 aa).

Disordered stretches follow at residues methionine 1–asparagine 32, leucine 44–lysine 63, glycine 120–serine 145, and arginine 164–glutamate 193. A compositionally biased stretch (low complexity) spans proline 15 to glycine 31. The interval serine 29–isoleucine 160 is RNA-binding. The CoV N NTD domain occupies glycine 31–aspartate 156. The segment covering arginine 164 to alanine 179 has biased composition (low complexity). A compositionally biased stretch (basic and acidic residues) spans proline 180–alanine 192. Residue serine 190 is modified to Phosphoserine; by host. Residues threonine 215–proline 331 form the CoV N CTD domain. Positions arginine 226–aspartate 333 are dimerization. An intrachain disulfide couples cysteine 320 to cysteine 323. A disordered region spans residues glycine 326–leucine 409. Residues arginine 341 to proline 355 are compositionally biased toward polar residues. Residues glutamine 358 to lysine 367 show a composition bias toward basic residues. Basic and acidic residues predominate over residues lysine 368–asparagine 384. The residue at position 378 (threonine 378) is a Phosphothreonine; by host. Serine 379 carries the post-translational modification Phosphoserine; by host.

It belongs to the gammacoronavirus nucleocapsid protein family. Homooligomer. Both monomeric and oligomeric forms interact with RNA. Interacts with protein M. Interacts with NSP3; this interaction serves to tether the genome to the newly translated replicase-transcriptase complex at a very early stage of infection. Post-translationally, ADP-ribosylated. The ADP-ribosylation is retained in the virion during infection. Phosphorylated on serine and threonine residues.

The protein resides in the virion. The protein localises to the host endoplasmic reticulum-Golgi intermediate compartment. It localises to the host Golgi apparatus. Its function is as follows. Packages the positive strand viral genome RNA into a helical ribonucleocapsid (RNP) and plays a fundamental role during virion assembly through its interactions with the viral genome and membrane protein M. Plays an important role in enhancing the efficiency of subgenomic viral RNA transcription as well as viral replication. The polypeptide is Nucleoprotein (Avian infectious bronchitis virus (strain H120) (IBV)).